Reading from the N-terminus, the 67-residue chain is Protein AaeX (67 aa).

2 helical membrane passes run 3 to 23 (LLPVMVIFGLSFPPIFLELLI) and 39 to 59 (GIYEFVWHPALFNTALYCCLF).

The protein belongs to the AaeX family.

The protein resides in the cell membrane. This Yersinia pseudotuberculosis serotype O:1b (strain IP 31758) protein is Protein AaeX.